A 105-amino-acid polypeptide reads, in one-letter code: Nucleoid-associated protein PTH_0052 (105 aa).

Belongs to the YbaB/EbfC family. Homodimer.

Its subcellular location is the cytoplasm. The protein resides in the nucleoid. Its function is as follows. Binds to DNA and alters its conformation. May be involved in regulation of gene expression, nucleoid organization and DNA protection. The chain is Nucleoid-associated protein PTH_0052 from Pelotomaculum thermopropionicum (strain DSM 13744 / JCM 10971 / SI).